The following is a 116-amino-acid chain: Spexin (116 aa).

An N-terminal signal peptide occupies residues 1-26; it reads MKGPSVLAVTAVVLLLVLSALENSSG. The propeptide occupies 27–35; the sequence is APQRLSEKR. Gln-49 carries the glutamine amide modification. Propeptides lie at residues 50–116 and 74–116; these read GRRF…LFNW and PDLE…LFNW. Positions 52 to 77 are disordered; sequence RFLSDQSRRKELADRPPPERRNPDLE. Over residues 53–75 the composition is skewed to basic and acidic residues; it reads FLSDQSRRKELADRPPPERRNPD.

Belongs to the spexin family.

Its subcellular location is the secreted. It is found in the extracellular space. The protein localises to the cytoplasmic vesicle. It localises to the secretory vesicle. Functionally, plays a role as a central modulator of cardiovascular and renal function and nociception. Also plays a role in energy metabolism and storage. Inhibits adrenocortical cell proliferation with minor stimulation on corticosteroid release. Its function is as follows. Acts as a ligand for galanin receptors GALR2 and GALR3. Intracerebroventricular administration of the peptide induces an increase in arterial blood pressure, a decrease in both heart rate and renal excretion and delayed natriuresis. Intraventricular administration of the peptide induces antinociceptive activity. Also induces contraction of muscarinic-like stomach smooth muscles. Intraperitoneal administration of the peptide induces a reduction in food consumption and body weight. Inhibits long chain fatty acid uptake into adipocytes. Intracerebroventricular administration of the peptide induces a decrease in heart rate, but no change in arterial pressure, and an increase in urine flow rate. Intraventricular administration of the peptide induces antinociceptive activity. This chain is Spexin (Spx), found in Mus musculus (Mouse).